We begin with the raw amino-acid sequence, 185 residues long: Adenine phosphoribosyltransferase (185 aa).

It belongs to the purine/pyrimidine phosphoribosyltransferase family. As to quaternary structure, homodimer.

It is found in the cytoplasm. The enzyme catalyses AMP + diphosphate = 5-phospho-alpha-D-ribose 1-diphosphate + adenine. Its pathway is purine metabolism; AMP biosynthesis via salvage pathway; AMP from adenine: step 1/1. Its function is as follows. Catalyzes a salvage reaction resulting in the formation of AMP, that is energically less costly than de novo synthesis. This chain is Adenine phosphoribosyltransferase, found in Pectobacterium carotovorum subsp. carotovorum (strain PC1).